Consider the following 381-residue polypeptide: Chaperone protein DnaJ (381 aa).

Residues 5–70 enclose the J domain; sequence DFYEVLGVGR…QKKAAYDQYG (66 aa). A CR-type zinc finger spans residues 136–214; the sequence is GVSKEIEVPT…CHGQGRKQKT (79 aa). Positions 149, 152, 166, 169, 188, 191, 202, and 205 each coordinate Zn(2+). CXXCXGXG motif repeat units follow at residues 149 to 156, 166 to 173, 188 to 195, and 202 to 209; these read CDTCDGSG, CGTCHGHG, CPTCHGKG, and CNECHGQG.

It belongs to the DnaJ family. Homodimer. Zn(2+) serves as cofactor.

The protein resides in the cytoplasm. Participates actively in the response to hyperosmotic and heat shock by preventing the aggregation of stress-denatured proteins and by disaggregating proteins, also in an autonomous, DnaK-independent fashion. Unfolded proteins bind initially to DnaJ; upon interaction with the DnaJ-bound protein, DnaK hydrolyzes its bound ATP, resulting in the formation of a stable complex. GrpE releases ADP from DnaK; ATP binding to DnaK triggers the release of the substrate protein, thus completing the reaction cycle. Several rounds of ATP-dependent interactions between DnaJ, DnaK and GrpE are required for fully efficient folding. Also involved, together with DnaK and GrpE, in the DNA replication of plasmids through activation of initiation proteins. In Vibrio campbellii (strain ATCC BAA-1116), this protein is Chaperone protein DnaJ.